Here is a 432-residue protein sequence, read N- to C-terminus: Glutamate-1-semialdehyde 2,1-aminomutase (432 aa).

An N6-(pyridoxal phosphate)lysine modification is found at lysine 272.

This sequence belongs to the class-III pyridoxal-phosphate-dependent aminotransferase family. HemL subfamily. Homodimer. Pyridoxal 5'-phosphate is required as a cofactor.

It is found in the cytoplasm. It catalyses the reaction (S)-4-amino-5-oxopentanoate = 5-aminolevulinate. The protein operates within porphyrin-containing compound metabolism; protoporphyrin-IX biosynthesis; 5-aminolevulinate from L-glutamyl-tRNA(Glu): step 2/2. Its pathway is porphyrin-containing compound metabolism; chlorophyll biosynthesis. The sequence is that of Glutamate-1-semialdehyde 2,1-aminomutase from Picosynechococcus sp. (strain ATCC 27264 / PCC 7002 / PR-6) (Agmenellum quadruplicatum).